The primary structure comprises 181 residues: Inner membrane-spanning protein YciB (181 aa).

A run of 5 helical transmembrane segments spans residues Phe8–Ala28, Ile53–Phe73, Trp76–Gly96, Leu121–Phe141, and Phe149–Ile169.

It belongs to the YciB family.

The protein resides in the cell inner membrane. In terms of biological role, plays a role in cell envelope biogenesis, maintenance of cell envelope integrity and membrane homeostasis. The protein is Inner membrane-spanning protein YciB of Coxiella burnetii (strain CbuG_Q212) (Coxiella burnetii (strain Q212)).